An 805-amino-acid chain; its full sequence is Translation initiation factor IF-2 (805 aa).

Disordered regions lie at residues 68 to 89 (VVTEQAQAPAEVEEKKEEEKKE) and 141 to 215 (KEKE…KEKK). Residues 79–89 (VEEKKEEEKKE) are compositionally biased toward basic and acidic residues. Residues 306–474 (PRPPIVVVMG…MILLLADILE (169 aa)) enclose the tr-type G domain. The tract at residues 315-322 (GHVDHGKT) is G1. GTP is bound at residue 315–322 (GHVDHGKT). The tract at residues 340–344 (GITQH) is G2. Residues 362–365 (DTPG) form a G3 region. GTP contacts are provided by residues 362–366 (DTPGH) and 416–419 (NKID). Residues 416-419 (NKID) are G4. Residues 452–454 (SAK) form a G5 region.

This sequence belongs to the TRAFAC class translation factor GTPase superfamily. Classic translation factor GTPase family. IF-2 subfamily.

The protein localises to the cytoplasm. One of the essential components for the initiation of protein synthesis. Protects formylmethionyl-tRNA from spontaneous hydrolysis and promotes its binding to the 30S ribosomal subunits. Also involved in the hydrolysis of GTP during the formation of the 70S ribosomal complex. The sequence is that of Translation initiation factor IF-2 (infB) from Aquifex aeolicus (strain VF5).